Consider the following 599-residue polypeptide: NADH-quinone oxidoreductase subunit C/D (599 aa).

Residues 1–189 are NADH dehydrogenase I subunit C; sequence MTELMTQNSA…DPFVLTKQKE (189 aa). The tract at residues 213 to 599 is NADH dehydrogenase I subunit D; the sequence is DFMFLNLGPN…IDFVMSDVDR (387 aa).

This sequence in the N-terminal section; belongs to the complex I 30 kDa subunit family. It in the C-terminal section; belongs to the complex I 49 kDa subunit family. As to quaternary structure, NDH-1 is composed of 13 different subunits. Subunits NuoB, CD, E, F, and G constitute the peripheral sector of the complex.

It is found in the cell inner membrane. It carries out the reaction a quinone + NADH + 5 H(+)(in) = a quinol + NAD(+) + 4 H(+)(out). Functionally, NDH-1 shuttles electrons from NADH, via FMN and iron-sulfur (Fe-S) centers, to quinones in the respiratory chain. The immediate electron acceptor for the enzyme in this species is believed to be ubiquinone. Couples the redox reaction to proton translocation (for every two electrons transferred, four hydrogen ions are translocated across the cytoplasmic membrane), and thus conserves the redox energy in a proton gradient. The protein is NADH-quinone oxidoreductase subunit C/D of Sodalis glossinidius (strain morsitans).